The following is a 101-amino-acid chain: Replication restart protein PriB (101 aa).

The SSB domain maps to 1-101 (MTTNNLVLAG…LHAENVELKT (101 aa)).

The protein belongs to the PriB family. As to quaternary structure, homodimer. Interacts with PriA and DnaT. Component of the replication restart primosome. Primosome assembly occurs via a 'hand-off' mechanism. PriA binds to replication forks, subsequently PriB then DnaT bind; DnaT then displaces ssDNA to generate the helicase loading substrate.

Involved in the restart of stalled replication forks, which reloads the replicative helicase on sites other than the origin of replication; the PriA-PriB pathway is the major replication restart pathway. During primosome assembly it facilitates complex formation between PriA and DnaT on DNA; stabilizes PriA on DNA. Stimulates the DNA unwinding activity of PriA helicase. The protein is Replication restart protein PriB of Shewanella halifaxensis (strain HAW-EB4).